Here is a 286-residue protein sequence, read N- to C-terminus: Nucleoid occlusion protein (286 aa).

A DNA-binding region (H-T-H motif) is located at residues 147–166 (EALAQRLGKNQSTVANKLRL).

The protein belongs to the ParB family.

Its subcellular location is the cytoplasm. It localises to the nucleoid. In terms of biological role, effects nucleoid occlusion by binding relatively nonspecifically to DNA and preventing the assembly of the division machinery in the vicinity of the nucleoid, especially under conditions that disturb the cell cycle. It helps to coordinate cell division and chromosome segregation by preventing the formation of the Z ring through the nucleoid, which would cause chromosome breakage. The chain is Nucleoid occlusion protein from Oceanobacillus iheyensis (strain DSM 14371 / CIP 107618 / JCM 11309 / KCTC 3954 / HTE831).